The following is a 501-amino-acid chain: Glycerol kinase (501 aa).

Thr12 contributes to the ADP binding site. ATP-binding residues include Thr12, Thr13, and Ser14. Residue Thr12 participates in sn-glycerol 3-phosphate binding. Arg16 serves as a coordination point for ADP. Positions 82, 83, 134, and 244 each coordinate sn-glycerol 3-phosphate. 5 residues coordinate glycerol: Arg82, Glu83, Tyr134, Asp244, and Gln245. ADP-binding residues include Thr266 and Gly310. ATP-binding residues include Thr266, Gly310, Gln314, and Gly411. Residues Gly411 and Asn415 each contribute to the ADP site.

Belongs to the FGGY kinase family.

The enzyme catalyses glycerol + ATP = sn-glycerol 3-phosphate + ADP + H(+). The protein operates within polyol metabolism; glycerol degradation via glycerol kinase pathway; sn-glycerol 3-phosphate from glycerol: step 1/1. Its activity is regulated as follows. Inhibited by fructose 1,6-bisphosphate (FBP). Its function is as follows. Key enzyme in the regulation of glycerol uptake and metabolism. Catalyzes the phosphorylation of glycerol to yield sn-glycerol 3-phosphate. In Methylobacterium radiotolerans (strain ATCC 27329 / DSM 1819 / JCM 2831 / NBRC 15690 / NCIMB 10815 / 0-1), this protein is Glycerol kinase.